The sequence spans 118 residues: UPF0102 protein DICTH_1420 (118 aa).

Belongs to the UPF0102 family.

This Dictyoglomus thermophilum (strain ATCC 35947 / DSM 3960 / H-6-12) protein is UPF0102 protein DICTH_1420.